The following is a 247-amino-acid chain: Glucosamine-6-phosphate deaminase (247 aa).

Asp-67 functions as the Proton acceptor; for enolization step in the catalytic mechanism. Asn-136 serves as the catalytic For ring-opening step. Residue His-138 is the Proton acceptor; for ring-opening step of the active site. Glu-143 functions as the For ring-opening step in the catalytic mechanism.

This sequence belongs to the glucosamine/galactosamine-6-phosphate isomerase family. NagB subfamily.

It catalyses the reaction alpha-D-glucosamine 6-phosphate + H2O = beta-D-fructose 6-phosphate + NH4(+). Its pathway is amino-sugar metabolism; N-acetylneuraminate degradation; D-fructose 6-phosphate from N-acetylneuraminate: step 5/5. In terms of biological role, catalyzes the reversible isomerization-deamination of glucosamine 6-phosphate (GlcN6P) to form fructose 6-phosphate (Fru6P) and ammonium ion. The sequence is that of Glucosamine-6-phosphate deaminase from Shouchella clausii (strain KSM-K16) (Alkalihalobacillus clausii).